Reading from the N-terminus, the 101-residue chain is MRLMIMFDLPVATSKDRRNYRRFRRALIDEGFLMIQYSVYVRVCKTKKSAAYMEQRIATVKPPTGIVQTLMVTEAQYQSMHFMVGTEKQDIRNSADRTVMI.

Asp-8 contributes to the Mg(2+) binding site.

The protein belongs to the CRISPR-associated endoribonuclease Cas2 protein family. In terms of assembly, homodimer, forms a heterotetramer with a Cas1 homodimer. Requires Mg(2+) as cofactor.

Its function is as follows. CRISPR (clustered regularly interspaced short palindromic repeat), is an adaptive immune system that provides protection against mobile genetic elements (viruses, transposable elements and conjugative plasmids). CRISPR clusters contain sequences complementary to antecedent mobile elements and target invading nucleic acids. CRISPR clusters are transcribed and processed into CRISPR RNA (crRNA). Functions as a ssRNA-specific endoribonuclease. Involved in the integration of spacer DNA into the CRISPR cassette. The protein is CRISPR-associated endoribonuclease Cas2 of Lacticaseibacillus rhamnosus (strain ATCC 53103 / LMG 18243 / GG) (Lactobacillus rhamnosus).